The primary structure comprises 445 residues: Flagellum-associated coiled-coil domain-containing protein 1 (445 aa).

The disordered stretch occupies residues 26–47 (PQLPRKNSTGSSKLTPLVPAPK). A compositionally biased stretch (polar residues) spans 30–39 (RKNSTGSSKL). 2 coiled-coil regions span residues 122-226 (SRTN…TYQD) and 283-315 (AVFE…TKEV). Lys376 carries the N6-acetyllysine modification. The stretch at 387–414 (EKYKHTIQILTEENIHLKQKIISKNEEI) forms a coiled coil.

It is found in the cytoplasm. The protein localises to the cytoplasmic granule. It localises to the cell projection. Its subcellular location is the cilium. The protein resides in the flagellum. This Homo sapiens (Human) protein is Flagellum-associated coiled-coil domain-containing protein 1.